A 561-amino-acid chain; its full sequence is Lipase maturation factor 1 (561 aa).

The segment at 1 to 32 is disordered; the sequence is MAAPRESLRRRKAGAGDPEPEAPPGQGRDLKG. The Cytoplasmic segment spans residues 1–42; it reads MAAPRESLRRRKAGAGDPEPEAPPGQGRDLKGRPARLRAGTF. The helical transmembrane segment at 43 to 65 threads the bilayer; that stretch reads WLTRIVLLRALAFVYFVAFLVAF. The Lumenal segment spans residues 66–120; the sequence is HQNKQLIGDRGLLPCRAYLQSVQRHFGGRVSWDALSYAPTILWLLDWSHMDANLD. A helical membrane pass occupies residues 121–144; the sequence is ALALLGLGISSFILVSGCANMVLM. The Cytoplasmic segment spans residues 145-200; that stretch reads AALWVLYMSLVNVGQIWYSFGWESQLLETGFLGIFLCPLWTLSALPRGTPTSWVVM. The chain crosses the membrane as a helical span at residues 201 to 214; sequence WGFRWLIFRIMLGA. The Lumenal portion of the chain corresponds to 215–285; the sequence is GLIKIRGDRC…LGRRMCIVHG (71 aa). The helical transmembrane segment at 286-314 threads the bilayer; sequence ALQVLFQVVLIISGNLSFLNWLTIVPSLA. The Cytoplasmic segment spans residues 315–360; it reads CFDDATLGGLFPSGPGRLKDQVLKIQEEETRGARAPRTRGSVARGT. The chain crosses the membrane as a helical span at residues 361-382; that stretch reads VNLALGILVAWLSIPVVLNLLS. Residues 383–561 lie on the Lumenal side of the membrane; sequence PRQVMNSSFN…SRQWPYPEPE (179 aa).

This sequence belongs to the lipase maturation factor family. Interacts with LPL and SEL1L.

The protein localises to the endoplasmic reticulum membrane. Involved in the maturation of specific proteins in the endoplasmic reticulum. Required for maturation and transport of active lipoprotein lipase (LPL) through the secretory pathway. Each LMF1 molecule chaperones 50 or more molecules of LPL. This is Lipase maturation factor 1 (LMF1) from Bos taurus (Bovine).